The following is a 110-amino-acid chain: Single-stranded DNA-binding protein 1 (110 aa).

An SSB domain is found at 1–104 (MNKILLIGRM…VVGEEVQFLE (104 aa)).

Homotetramer.

The protein is Single-stranded DNA-binding protein 1 (ssb1) of Clostridium acetobutylicum (strain ATCC 824 / DSM 792 / JCM 1419 / IAM 19013 / LMG 5710 / NBRC 13948 / NRRL B-527 / VKM B-1787 / 2291 / W).